Consider the following 464-residue polypeptide: MRIFDTSKREKVEFSPIKDGEVSIYLCGPTVYDDAHLGHAKSAVSFDLLRRVLKALGCKVKFARNYTDIDDKILNKMAQTGQSLEEITNKYIAHYESDMGALNVLDPDFKPKATQCLEAIISYIKVLMDRGVAYKTSDGIYFDTSKDSGYFSISGKDNNTDLIARVASFGEKRDEKDFVLWKFDEKWYESPFGKGRPGWHTECVAMIREFLSDKENDKFEIDIHAGGIDLLFPHHENEASQCRCAYHKNLSKYWMHNGFIKVNNEKMSKSLNNSFFVKDALKNVHGEVLRYYLLTSHYRAHFNYSDEDLVASKKRLDKIYRLKKRVDGVQAGMANESFKSELLEALSDDLNASKALASVDEFVKTANERLDNNPKDKAYKAEVVANLELIGEILGIAITNYVEYFQFGVSDEQKEHIQKLLDERAVAKKERNFARADEIRDELAKMNISIMDTPNGAVWERNNE.

C27 contributes to the Zn(2+) binding site. A 'HIGH' region motif is present at residues 29-39 (PTVYDDAHLGH). Residues C203, H234, and E238 each coordinate Zn(2+). The 'KMSKS' region motif lies at 266-270 (KMSKS). K269 lines the ATP pocket.

Belongs to the class-I aminoacyl-tRNA synthetase family. Monomer. Zn(2+) is required as a cofactor.

The protein localises to the cytoplasm. The enzyme catalyses tRNA(Cys) + L-cysteine + ATP = L-cysteinyl-tRNA(Cys) + AMP + diphosphate. The polypeptide is Cysteine--tRNA ligase (Campylobacter concisus (strain 13826)).